Reading from the N-terminus, the 218-residue chain is Large ribosomal subunit protein uL3 (218 aa).

Positions 127 to 167 (GFSRGPMSHGSKNHRLPGSIGAGTTPGRVYPGKRMAGRMGG) are disordered.

The protein belongs to the universal ribosomal protein uL3 family. In terms of assembly, part of the 50S ribosomal subunit. Forms a cluster with proteins L14 and L19.

One of the primary rRNA binding proteins, it binds directly near the 3'-end of the 23S rRNA, where it nucleates assembly of the 50S subunit. This Prochlorococcus marinus (strain NATL1A) protein is Large ribosomal subunit protein uL3.